The following is a 209-amino-acid chain: Uracil phosphoribosyltransferase (209 aa).

5-phospho-alpha-D-ribose 1-diphosphate is bound by residues Arg79, Arg104, and 131–139; that span reads DPMLATGGS. Residues Ile194 and 199–201 each bind uracil; that span reads GDA. Asp200 contributes to the 5-phospho-alpha-D-ribose 1-diphosphate binding site.

The protein belongs to the UPRTase family. Mg(2+) serves as cofactor.

The enzyme catalyses UMP + diphosphate = 5-phospho-alpha-D-ribose 1-diphosphate + uracil. It participates in pyrimidine metabolism; UMP biosynthesis via salvage pathway; UMP from uracil: step 1/1. Allosterically activated by GTP. In terms of biological role, catalyzes the conversion of uracil and 5-phospho-alpha-D-ribose 1-diphosphate (PRPP) to UMP and diphosphate. The sequence is that of Uracil phosphoribosyltransferase from Symbiobacterium thermophilum (strain DSM 24528 / JCM 14929 / IAM 14863 / T).